A 663-amino-acid polypeptide reads, in one-letter code: Ankyrin repeat and SAM domain-containing protein 3 (663 aa).

The interaction with NEK7 stretch occupies residues 1-421 (MSELSDEASE…PGSEPQAEKS (421 aa)). A phosphoserine mark is found at S2 and S5. ANK repeat units lie at residues 34–64 (DVPLDLHTAASIGQYEVVKECVQRRELDLNK), 68–97 (GGWTPLMYASYIGHDTIVHLLLEAGVSVNV), 101–130 (EGQTPLMLASSCGNESIAYFLLQQGAELEM), 134–163 (QGWTALFHCTSAGHQQMVKFLLESGANANV), 168–197 (YGFTPLMEAAAAGHEIIVQYFLNHGVKVDT), and 201–220 (SGATARMLAKQYGHMKIVAL). At N96 the chain carries 3-hydroxyasparagine. A phosphoserine mark is found at S201, S225, S243, S244, and S245. Disordered stretches follow at residues 242 to 261 (LSSSDESWPVPQRQRPCRKK) and 278 to 425 (TGLG…PYSG). The residue at position 318 (T318) is a Phosphothreonine. Phosphoserine is present on S319. Residues 322–337 (NERDVESSSSSSREEP) are compositionally biased toward basic and acidic residues. Phosphoserine occurs at positions 366, 369, and 373. Basic residues predominate over residues 378–395 (KSSVRKQTRTYLKNKSRH). Residues 424–487 (SGPQDLATLL…TSAIARWHSS (64 aa)) form the SAM domain. A coiled-coil region spans residues 500-575 (ADRLEAEMQE…AALVLDQLRA (76 aa)). A Phosphoserine modification is found at S540. Disordered stretches follow at residues 585-604 (KQHHSPSEATQNPPFLPADS) and 637-663 (AEPGETTDAEWEEMEGTIARRDDSDVG). Positions 641–651 (ETTDAEWEEME) are enriched in acidic residues. A compositionally biased stretch (basic and acidic residues) spans 654–663 (IARRDDSDVG).

As to quaternary structure, homooligomer. Interacts (via SAM domain) with ANKS6 (via SAM domain). Interacts with BICC1. Interacts with NPHP1. Interacts with NEK8. Interacts with HIF1AN. Interacts with NEK7; this interaction alters the subcellular distribution of NEK7 by preventing its nuclear translocation. Post-translationally, hydroxylated at Asn-96, most probably by HIF1AN. In terms of processing, phosphorylations at Ser-5, Ser-225, Thr-318, Ser-319, Ser-366 and Ser-369 occur in a NEK7-dependent manner. Polyubiquitinated.

The protein localises to the cell projection. It is found in the cilium. Its subcellular location is the cytoplasm. May be involved in vasopressin signaling in the kidney. This Rattus norvegicus (Rat) protein is Ankyrin repeat and SAM domain-containing protein 3 (Anks3).